We begin with the raw amino-acid sequence, 542 residues long: Phosphoacetylglucosamine mutase 2 (542 aa).

Ser-77 acts as the Phosphoserine intermediate in catalysis. Ser-77 contributes to the Mg(2+) binding site. Residues Ser-77 and Ser-82 each carry the phosphoserine modification. Mg(2+) is bound by residues Asp-292, Asp-294, and Asp-296. Residues 385-387, 510-514, and Arg-519 contribute to the substrate site; these read EAN and RSSGT.

This sequence belongs to the phosphohexose mutase family. The cofactor is Mg(2+).

It localises to the cytoplasm. The protein localises to the nucleus. It catalyses the reaction N-acetyl-alpha-D-glucosamine 1-phosphate = N-acetyl-D-glucosamine 6-phosphate. It functions in the pathway nucleotide-sugar biosynthesis; UDP-N-acetyl-alpha-D-glucosamine biosynthesis; N-acetyl-alpha-D-glucosamine 1-phosphate from alpha-D-glucosamine 6-phosphate (route I): step 2/2. Its function is as follows. Catalyzes the conversion of GlcNAc-6-P into GlcNAc-1-P during the synthesis of uridine diphosphate/UDP-GlcNAc, which is a biosynthetic precursor of chitin and also supplies the amino sugars for N-linked oligosaccharides of glycoproteins. This is Phosphoacetylglucosamine mutase 2 from Schizosaccharomyces pombe (strain 972 / ATCC 24843) (Fission yeast).